The sequence spans 285 residues: Phosphatidate cytidylyltransferase (285 aa).

The next 8 helical transmembrane spans lie at 10–30 (FVLI…GFAI), 56–76 (VWLA…LPEY), 93–113 (LGWW…AAIW), 121–141 (LIFG…LRAW), 151–171 (AIWL…AYMF), 190–210 (WQGF…YGMW), 213–233 (LDVA…ASVL), and 264–284 (IDSL…VFRT).

Belongs to the CDS family.

The protein localises to the cell inner membrane. It carries out the reaction a 1,2-diacyl-sn-glycero-3-phosphate + CTP + H(+) = a CDP-1,2-diacyl-sn-glycerol + diphosphate. It participates in phospholipid metabolism; CDP-diacylglycerol biosynthesis; CDP-diacylglycerol from sn-glycerol 3-phosphate: step 3/3. This chain is Phosphatidate cytidylyltransferase (cdsA), found in Escherichia coli O157:H7.